We begin with the raw amino-acid sequence, 108 residues long: Peptidyl-prolyl cis-trans isomerase FKBP1A (108 aa).

Residue Ser10 is modified to Phosphoserine. The PPIase FKBP-type domain maps to 20–108 (GQTCVVHYTG…VFDVELLKLE (89 aa)). Lys53 bears the N6-acetyllysine; alternate mark. N6-succinyllysine; alternate is present on Lys53.

This sequence belongs to the FKBP-type PPIase family. FKBP1 subfamily. As to quaternary structure, interacts with TGFBR1; prevents TGFBR1 phosphorylation by TGFBR2 and stabilizes it in the inactive conformation. Interacts with ACVR1B and SMAD7. Identified in a complex composed of RYR1, PDE4D, PKA, FKBP1A and protein phosphatase 1 (PP1). Interacts directly with RYR2. Interacts directly with RYR3. Interacts directly with RYR1. Interacts with GLMN; rapamycin and FK506 abolish the interaction with GLMN in a dose dependent manner. As to expression, ubiquitous.

The protein resides in the cytoplasm. Its subcellular location is the cytosol. It is found in the sarcoplasmic reticulum membrane. It catalyses the reaction [protein]-peptidylproline (omega=180) = [protein]-peptidylproline (omega=0). Inhibited by both FK506 and rapamycin. In terms of biological role, keeps in an inactive conformation TGFBR1, the TGF-beta type I serine/threonine kinase receptor, preventing TGF-beta receptor activation in absence of ligand. Recruits SMAD7 to ACVR1B which prevents the association of SMAD2 and SMAD3 with the activin receptor complex, thereby blocking the activin signal. May modulate the RYR1 calcium channel activity. PPIases accelerate the folding of proteins. It catalyzes the cis-trans isomerization of proline imidic peptide bonds in oligopeptides. The chain is Peptidyl-prolyl cis-trans isomerase FKBP1A (Fkbp1a) from Rattus norvegicus (Rat).